Here is a 524-residue protein sequence, read N- to C-terminus: MGKPARKGCDWKRFLRNNWLLLSTVVAVVLGIVIGVLVREYSKLSNLEKFYFSFPGEILMRMLKLVILPLIVSSMITGVATLDSNVSGKIGLRAVVYYFCTTLIAVILGIVLVVSIKPGVTQKVNEIDRTGNTPEVSTVDAMLDLIRNMFPENLVQACFQQYKTTREEVELSEEPGTNSTEATVTAIMTTAISKNKTKEYKVVGMYSDGINVLGLIVFCLVLGIVIGRKWEKGQILVDFFNALSDATMKIVQIIMCYMPIGILFLIAGKIIEVEDWEIFRKLGLYMATVLSGLAIHSIVILPLIYFIIVRKNPFQFAMGMAQALLTALMISSSSATLPVTFRCAEEKNRVDKRITRFVLPVGATINMDGTALYEAVAAVFIAQLNDLDLSVGQIITISVTATAASIGAAGVPQPGLVTMVIVLSAVGLPAEDVTLIIAVDWLLDRFRTMVNVLGDAFGTGIVEKLSKKELEQMDVSSEVNIVNPFTLESTALDNEDSDTKKSYVNGGFAVDKSDTISFTQTSQF.

The Cytoplasmic segment spans residues 1 to 18 (MGKPARKGCDWKRFLRNN). A helical membrane pass occupies residues 19 to 38 (WLLLSTVVAVVLGIVIGVLV). Topologically, residues 39 to 61 (REYSKLSNLEKFYFSFPGEILMR) are extracellular. The chain crosses the membrane as a helical span at residues 62-82 (MLKLVILPLIVSSMITGVATL). Topologically, residues 83 to 93 (DSNVSGKIGLR) are cytoplasmic. The helical transmembrane segment at 94 to 114 (AVVYYFCTTLIAVILGIVLVV) threads the bilayer. Na(+) is bound by residues Tyr98, Thr101, and Thr102. At 115-205 (SIKPGVTQKV…KTKEYKVVGM (91 aa)) the chain is on the extracellular side. Residues Asn178 and Asn195 are each glycosylated (N-linked (GlcNAc...) asparagine). Residues 206 to 229 (YSDGINVLGLIVFCLVLGIVIGRK) traverse the membrane as a helical segment. The Cytoplasmic portion of the chain corresponds to 230-238 (WEKGQILVD). A helical membrane pass occupies residues 239-266 (FFNALSDATMKIVQIIMCYMPIGILFLI). The Extracellular segment spans residues 267-286 (AGKIIEVEDWEIFRKLGLYM). A helical membrane pass occupies residues 287–308 (ATVLSGLAIHSIVILPLIYFII). Residues 309-313 (VRKNP) are Cytoplasmic-facing. Positions 314–344 (FQFAMGMAQALLTALMISSSSATLPVTFRCA) form an intramembrane region, discontinuously helical. Residues Ser331 and Ser333 each coordinate L-aspartate. The Cytoplasmic portion of the chain corresponds to 345-353 (EEKNRVDKR). A helical membrane pass occupies residues 354-380 (ITRFVLPVGATINMDGTALYEAVAAVF). 4 residues coordinate Na(+): Gly362, Thr364, Asn366, and Asp368. An L-aspartate-binding site is contributed by Thr370. Residues 381–393 (IAQLNDLDLSVGQ) lie on the Extracellular side of the membrane. An intramembrane region (discontinuously helical) is located at residues 394–427 (IITISVTATAASIGAAGVPQPGLVTMVIVLSAVG). Residues Ser405, Ile406, and Ala408 each contribute to the Na(+) site. Val411 is an L-aspartate binding site. Over 428–440 (LPAEDVTLIIAVD) the chain is Extracellular. Residues 441 to 462 (WLLDRFRTMVNVLGDAFGTGIV) traverse the membrane as a helical segment. The L-aspartate site is built by Arg447, Thr448, and Asn451. Residues Asn451 and Asp455 each contribute to the Na(+) site. The Cytoplasmic segment spans residues 463 to 524 (EKLSKKELEQ…TISFTQTSQF (62 aa)). Ser517 and Ser522 each carry phosphoserine.

Belongs to the dicarboxylate/amino acid:cation symporter (DAACS) (TC 2.A.23) family. SLC1A1 subfamily. As to quaternary structure, homotrimer. Interacts with ARL6IP5. Interacts with RTN2 (via N-terminus); the interaction promotes cell surface expression of SLC1A1. Interacts with SORCS2; this interaction is important for normal expression at the cell membrane.

It localises to the cell membrane. The protein localises to the apical cell membrane. The protein resides in the synapse. It is found in the synaptosome. Its subcellular location is the early endosome membrane. It localises to the late endosome membrane. The protein localises to the recycling endosome membrane. It catalyses the reaction K(+)(in) + L-glutamate(out) + 3 Na(+)(out) + H(+)(out) = K(+)(out) + L-glutamate(in) + 3 Na(+)(in) + H(+)(in). It carries out the reaction K(+)(in) + L-aspartate(out) + 3 Na(+)(out) + H(+)(out) = K(+)(out) + L-aspartate(in) + 3 Na(+)(in) + H(+)(in). The catalysed reaction is D-aspartate(out) + K(+)(in) + 3 Na(+)(out) + H(+)(out) = D-aspartate(in) + K(+)(out) + 3 Na(+)(in) + H(+)(in). The enzyme catalyses K(+)(in) + L-cysteine(out) + 3 Na(+)(out) + H(+)(out) = K(+)(out) + L-cysteine(in) + 3 Na(+)(in) + H(+)(in). Functionally, sodium-dependent, high-affinity amino acid transporter that mediates the uptake of L-glutamate and also L-aspartate and D-aspartate. Can also transport L-cysteine. Functions as a symporter that transports one amino acid molecule together with two or three Na(+) ions and one proton, in parallel with the counter-transport of one K(+) ion. Mediates Cl(-) flux that is not coupled to amino acid transport; this avoids the accumulation of negative charges due to aspartate and Na(+) symport. Plays an important role in L-glutamate and L-aspartate reabsorption in renal tubuli. Plays a redundant role in the rapid removal of released glutamate from the synaptic cleft, which is essential for terminating the postsynaptic action of glutamate. Contributes to glutathione biosynthesis and protection against oxidative stress via its role in L-glutamate and L-cysteine transport. Negatively regulated by ARL6IP5. The polypeptide is Excitatory amino acid transporter 3 (SLC1A1) (Bos taurus (Bovine)).